We begin with the raw amino-acid sequence, 542 residues long: uncharacterized protein (542 aa).

Helical transmembrane passes span 12 to 32, 57 to 77, 94 to 114, 123 to 143, 168 to 188, 191 to 211, 216 to 236, 243 to 263, 277 to 297, 313 to 333, 358 to 378, and 391 to 411; these read LVFG…GTVL, FGDV…AILY, VIVM…SWTA, AAAV…AGLA, LFAV…AALV, FVVS…LVTL, IDAP…AFLL, SGVV…PTVI, IATF…IPGA, VLAL…VQAT, VTSW…AVPM, and LIIF…GTSL.

It belongs to the monovalent cation:proton antiporter 1 (CPA1) transporter (TC 2.A.36) family.

The protein resides in the cell membrane. This is an uncharacterized protein from Mycobacterium bovis (strain ATCC BAA-935 / AF2122/97).